A 241-amino-acid chain; its full sequence is Ribosomal RNA small subunit methyltransferase G (241 aa).

Residues glycine 79, phenylalanine 84, 130 to 131 (AE), and arginine 150 contribute to the S-adenosyl-L-methionine site.

Belongs to the methyltransferase superfamily. RNA methyltransferase RsmG family.

It localises to the cytoplasm. Specifically methylates the N7 position of a guanine in 16S rRNA. In Limosilactobacillus reuteri (strain DSM 20016) (Lactobacillus reuteri), this protein is Ribosomal RNA small subunit methyltransferase G.